The following is a 250-amino-acid chain: Ubiquinone/menaquinone biosynthesis C-methyltransferase UbiE (250 aa).

S-adenosyl-L-methionine is bound by residues Thr73, Asp94, 122–123, and Ser139; that span reads NA.

This sequence belongs to the class I-like SAM-binding methyltransferase superfamily. MenG/UbiE family.

The enzyme catalyses a 2-demethylmenaquinol + S-adenosyl-L-methionine = a menaquinol + S-adenosyl-L-homocysteine + H(+). It catalyses the reaction a 2-methoxy-6-(all-trans-polyprenyl)benzene-1,4-diol + S-adenosyl-L-methionine = a 5-methoxy-2-methyl-3-(all-trans-polyprenyl)benzene-1,4-diol + S-adenosyl-L-homocysteine + H(+). Its pathway is quinol/quinone metabolism; menaquinone biosynthesis; menaquinol from 1,4-dihydroxy-2-naphthoate: step 2/2. The protein operates within cofactor biosynthesis; ubiquinone biosynthesis. In terms of biological role, methyltransferase required for the conversion of demethylmenaquinol (DMKH2) to menaquinol (MKH2) and the conversion of 2-polyprenyl-6-methoxy-1,4-benzoquinol (DDMQH2) to 2-polyprenyl-3-methyl-6-methoxy-1,4-benzoquinol (DMQH2). This is Ubiquinone/menaquinone biosynthesis C-methyltransferase UbiE from Francisella tularensis subsp. holarctica (strain FTNF002-00 / FTA).